Here is a 185-residue protein sequence, read N- to C-terminus: Peptidyl-tRNA hydrolase (185 aa).

Tyr14 serves as a coordination point for tRNA. The active-site Proton acceptor is the His19. Tyr65, Asn67, and Asn113 together coordinate tRNA.

This sequence belongs to the PTH family. Monomer.

The protein resides in the cytoplasm. It catalyses the reaction an N-acyl-L-alpha-aminoacyl-tRNA + H2O = an N-acyl-L-amino acid + a tRNA + H(+). Its function is as follows. Hydrolyzes ribosome-free peptidyl-tRNAs (with 1 or more amino acids incorporated), which drop off the ribosome during protein synthesis, or as a result of ribosome stalling. Catalyzes the release of premature peptidyl moieties from peptidyl-tRNA molecules trapped in stalled 50S ribosomal subunits, and thus maintains levels of free tRNAs and 50S ribosomes. This Rickettsia prowazekii (strain Madrid E) protein is Peptidyl-tRNA hydrolase.